Reading from the N-terminus, the 416-residue chain is Adenylosuccinate synthetase (416 aa).

Residues 13 to 19 and 41 to 43 each bind GTP; these read GDEGKGK and GHT. Asp14 serves as the catalytic Proton acceptor. Mg(2+) is bound by residues Asp14 and Gly41. Residues 14–17, 39–42, Thr126, Arg140, Gln220, Thr235, and Arg299 contribute to the IMP site; these read DEGK and NAGH. The active-site Proton donor is His42. 295 to 301 lines the substrate pocket; sequence VSTGRKR. Residues Arg301, 327 to 329, and 405 to 407 each bind GTP; these read KLD and STS.

Belongs to the adenylosuccinate synthetase family. As to quaternary structure, homodimer. Mg(2+) serves as cofactor.

The protein localises to the cytoplasm. The enzyme catalyses IMP + L-aspartate + GTP = N(6)-(1,2-dicarboxyethyl)-AMP + GDP + phosphate + 2 H(+). Its pathway is purine metabolism; AMP biosynthesis via de novo pathway; AMP from IMP: step 1/2. Its function is as follows. Plays an important role in the de novo pathway of purine nucleotide biosynthesis. Catalyzes the first committed step in the biosynthesis of AMP from IMP. This chain is Adenylosuccinate synthetase, found in Campylobacter lari (strain RM2100 / D67 / ATCC BAA-1060).